The primary structure comprises 491 residues: Sucrose transport protein SUC7 (491 aa).

A compositionally biased stretch (basic and acidic residues) spans 1–13 (MSDLQANKDETTV). The segment at 1 to 25 (MSDLQANKDETTVDRQSSSSVDLDG) is disordered. The Cytoplasmic segment spans residues 1 to 32 (MSDLQANKDETTVDRQSSSSVDLDGPSPLRKM). Residue Ser17 is modified to Phosphoserine. The helical transmembrane segment at 33–53 (ISVASIAAGIQFGWALQLSLL) threads the bilayer. The Extracellular portion of the chain corresponds to 54-67 (TPYVQLLGVPHKWP). The chain crosses the membrane as a helical span at residues 68-88 (SFIWLCGPVSGLLVQPSVGYF). Residues 89–100 (SDRCTSRFGRRR) lie on the Cytoplasmic side of the membrane. The chain crosses the membrane as a helical span at residues 101 to 121 (PFIATGALLVAVSVVLIGYAA). Topologically, residues 122–138 (DFGHSMGDKIDKPVKMR) are extracellular. Residues 139 to 159 (AVVIFALGFWILDVANNTLQG) traverse the membrane as a helical segment. Residues 160 to 180 (PCRAFLGDLAAGDAQKTRTAN) lie on the Cytoplasmic side of the membrane. The helical transmembrane segment at 181 to 201 (AFFSFFMAVGNVLGYAAGSYT) threads the bilayer. Residues 202–223 (NLYKIFPFTMTKACDIYCANLK) lie on the Extracellular side of the membrane. The helical transmembrane segment at 224 to 244 (SCFFLSITLLLVVTIIALWYV) threads the bilayer. The Cytoplasmic portion of the chain corresponds to 245-276 (EDKQWSPKADSDNEKTPFFGEIFGAFKVMKRP). Residues 277 to 297 (MWMLLIVTALNWIAWFPFLLY) traverse the membrane as a helical segment. Residues 298–323 (DTDWMGREVYGGDSKGDDKMKKLYNQ) lie on the Extracellular side of the membrane. Residues 324–344 (GIHVGALGLMLNSIVLGVMSL) traverse the membrane as a helical segment. Residues 345-358 (GIEGISRKMGGAKR) are Cytoplasmic-facing. The helical transmembrane segment at 359–379 (LWGAVNIILAVCLAMTVLVTK) threads the bilayer. The Extracellular portion of the chain corresponds to 380–402 (KAEEHRRIAGPMALPTDGIRAGA). Residues 403 to 423 (LTLFALLGIPLAITFSIPFAL) form a helical membrane-spanning segment. Residues 424-443 (ASIISSSSGAGQRLSLGVLN) are Cytoplasmic-facing. A helical transmembrane segment spans residues 444-464 (MAIVIPQMIVSFGVGPIDALF). Residues 465–468 (GDGN) are Extracellular-facing. Residues 469–489 (LPGFVVGAIAAAVSSIVAFTV) traverse the membrane as a helical segment. Residues 490–491 (LP) are Cytoplasmic-facing.

It belongs to the glycoside-pentoside-hexuronide (GPH) cation symporter transporter (TC 2.A.2.4) family. In terms of tissue distribution, expressed in anthers.

Its subcellular location is the cell membrane. The protein operates within glycan biosynthesis; sucrose metabolism. Functionally, may be responsible for the transport of glucosides into the cell, with the concomitant uptake of protons (symport system). Does not seem to transport sucrose. This is Sucrose transport protein SUC7 from Arabidopsis thaliana (Mouse-ear cress).